A 482-amino-acid polypeptide reads, in one-letter code: Kynurenine 3-monooxygenase (482 aa).

This sequence belongs to the aromatic-ring hydroxylase family. KMO subfamily. FAD is required as a cofactor.

It localises to the mitochondrion outer membrane. It catalyses the reaction L-kynurenine + NADPH + O2 + H(+) = 3-hydroxy-L-kynurenine + NADP(+) + H2O. It functions in the pathway cofactor biosynthesis; NAD(+) biosynthesis; quinolinate from L-kynurenine: step 1/3. In terms of biological role, catalyzes the hydroxylation of L-kynurenine (L-Kyn) to form 3-hydroxy-L-kynurenine (L-3OHKyn). Required for synthesis of quinolinic acid. The sequence is that of Kynurenine 3-monooxygenase from Phaeosphaeria nodorum (strain SN15 / ATCC MYA-4574 / FGSC 10173) (Glume blotch fungus).